We begin with the raw amino-acid sequence, 181 residues long: MVVAYKLSNGLEVILENGDITKVEADAIVNAANSYLSHGGGVALAIVRSGGYIIQEESDEYVRRNGPVPVGEVAVTTAGKLKARYVIHAVGPRYGIEGDDKLESAIRRSLEKADELKLSSIALPAISTGIYGYPYEICARIMSKVMKEYKPKFLKRILVVVYGDQAYSVFKKVFDNSLYMN.

Residues 1–178 (MVVAYKLSNG…VFKKVFDNSL (178 aa)) form the Macro domain.

This is an uncharacterized protein from Sulfolobus acidocaldarius (strain ATCC 33909 / DSM 639 / JCM 8929 / NBRC 15157 / NCIMB 11770).